Consider the following 291-residue polypeptide: Protein ILRUN (291 aa).

A disordered region spans residues 199-291; sequence NTQPHRKVEG…LHGPYPFGQS (93 aa). Polar residues predominate over residues 212–228; that stretch reads PFASPQKNRQSDENNLT. Phosphoserine is present on residues S215, S222, and S265. A compositionally biased stretch (low complexity) spans 257 to 276; that stretch reads LSQSSVNLSPSSPANNLSVV.

In terms of assembly, interacts with IRF3; the interaction inhibits IRF3 binding to its DNA consensus sequence.

The protein resides in the cytoplasm. Its subcellular location is the nucleus. Functionally, negative regulator of innate antiviral response. Blocks IRF3-dependent cytokine production such as IFNA, IFNB and TNF. Interacts with IRF3 and inhibits IRF3 recruitment to type I IFN promoter sequences while also reducing nuclear levels of the coactivators EP300 and CREBBP. In Mus musculus (Mouse), this protein is Protein ILRUN.